Reading from the N-terminus, the 198-residue chain is Segregation and condensation protein B (198 aa).

This sequence belongs to the ScpB family. As to quaternary structure, homodimer. Homodimerization may be required to stabilize the binding of ScpA to the Smc head domains. Component of a cohesin-like complex composed of ScpA, ScpB and the Smc homodimer, in which ScpA and ScpB bind to the head domain of Smc. The presence of the three proteins is required for the association of the complex with DNA.

The protein resides in the cytoplasm. In terms of biological role, participates in chromosomal partition during cell division. May act via the formation of a condensin-like complex containing Smc and ScpA that pull DNA away from mid-cell into both cell halves. The sequence is that of Segregation and condensation protein B from Streptococcus mutans serotype c (strain ATCC 700610 / UA159).